Here is a 363-residue protein sequence, read N- to C-terminus: G kinase-anchoring protein 1 (363 aa).

The interaction with IRS1 stretch occupies residues 1-93 (MASAVLSSVP…SHAICNAQHE (93 aa)). Disordered stretches follow at residues 20-111 (QVDS…NWQE) and 145-171 (EYEN…HQGK). 3 positions are modified to phosphoserine: Ser-23, Ser-25, and Ser-27. A compositionally biased stretch (polar residues) spans 39 to 48 (TGKSQTNKST). A coiled-coil region spans residues 43–75 (QTNKSTTNEKKREKRRKKKEQQQSEANELRNLA). The span at 102-111 (KDSREENWQE) shows a compositional bias: basic and acidic residues. A Phosphoserine; by PKG modification is found at Ser-104. Coiled-coil stretches lie at residues 126 to 158 (ADLE…QSKV) and 240 to 350 (EHNQ…YQGG).

The protein belongs to the GKAP1 family. In terms of assembly, interacts with PRKG1 and IRS1.

It localises to the golgi apparatus. Its function is as follows. Regulates insulin-dependent IRS1 tyrosine phosphorylation in adipocytes by modulating the availability of IRS1 to IR tyrosine kinase. Its association with IRS1 is required for insulin-induced translocation of SLC2A4 to the cell membrane. Involved in TNF-induced impairment of insulin-dependent IRS1 tyrosine phosphorylation. This is G kinase-anchoring protein 1 (GKAP1) from Bos taurus (Bovine).